Consider the following 483-residue polypeptide: UDP-glucosyl transferase 73B2 (483 aa).

The Proton acceptor role is filled by His22. An an anthocyanidin-binding site is contributed by His22. Asp133 functions as the Charge relay in the catalytic mechanism. 7 residues coordinate UDP-alpha-D-glucose: Ala355, Gln357, His372, Trp375, Asn376, Ser377, and Glu380. Ala395 lines the an anthocyanidin pocket. Positions 396 and 397 each coordinate UDP-alpha-D-glucose.

It belongs to the UDP-glycosyltransferase family. In terms of tissue distribution, expressed in roots and flowers.

The enzyme catalyses a 7-O-hydroxy-flavonol + UDP-alpha-D-glucose = a flavonol 7-O-beta-D-glucoside + UDP + H(+). Its pathway is secondary metabolite biosynthesis; flavonoid biosynthesis. Catalyzes the glycosylation of flavonoids from UDP-glucose. Uses a wide range of flavonoid substrates including flavonols (quercetin, kaempferol, isorhamnetin, 3-OH 7,2',4'-MeO-flavone), flavones (luteolin, apigenin), flavanones (naringenin, hesperetin), flavanonols (taxifolin), isoflavones (genistein, daidzein), flavonol glycosides (quercitrin, isoquercitrin, rutin), and chalcones (isoliquiritigenin). Specific for the C-7 position, with a 20-fold lower activity for the C-3 position. The protein is UDP-glucosyl transferase 73B2 (UGT73B2) of Arabidopsis thaliana (Mouse-ear cress).